We begin with the raw amino-acid sequence, 573 residues long: PCNA-interacting partner (573 aa).

Disordered stretches follow at residues 470 to 505 (VGKARIEASSENAHVGRWKGDKLPRKSTQRQISKGK) and 531 to 560 (PKVPSGSHSKAGGKLAQGTKGNRCPARGKL).

The protein belongs to the PARI family. In terms of assembly, interacts with RAD51 and PCNA. Interacts with PARP1. Interacts with TASOR. Expressed in the ovary, Sertoli cells of the testis and in granular cells within the cerebellum.

Its subcellular location is the cytoplasm. It is found in the nucleus. Functionally, required to suppress inappropriate homologous recombination, thereby playing a central role DNA repair and in the maintenance of genomic stability. Antagonizes homologous recombination by interfering with the formation of the RAD51-DNA homologous recombination structure. Binds single-strand DNA and poly(A) homopolymers. Positively regulate the poly(ADP-ribosyl)ation activity of PARP1; however such function may be indirect. This is PCNA-interacting partner (Parpbp) from Mus musculus (Mouse).